The sequence spans 367 residues: Protein TlpB (367 aa).

5 helical membrane-spanning segments follow: residues 15–35 (ILIS…SPYF), 53–73 (IIAP…GILI), 83–103 (IIPI…YVTF), 124–144 (IQAI…FFLL), and 153–173 (FYVV…LAPI).

The protein resides in the membrane. The chain is Protein TlpB (tlpB) from Flavobacterium psychrophilum.